A 425-amino-acid polypeptide reads, in one-letter code: uncharacterized protein (425 aa).

One can recognise an HD domain in the interval R55–L181.

This is an uncharacterized protein from Mycoplasma genitalium (strain ATCC 33530 / DSM 19775 / NCTC 10195 / G37) (Mycoplasmoides genitalium).